The chain runs to 363 residues: 3-isopropylmalate dehydrogenase (363 aa).

NAD(+) is bound at residue 78 to 91; it reads GKKWDYLPIESRPE. Substrate is bound by residues arginine 99, arginine 109, arginine 138, and aspartate 227. Residues aspartate 227, aspartate 251, and aspartate 255 each contribute to the Mg(2+) site. 285 to 297 serves as a coordination point for NAD(+); that stretch reads GSAPDIEGKNIAN.

Belongs to the isocitrate and isopropylmalate dehydrogenases family. LeuB type 1 subfamily. Homodimer. It depends on Mg(2+) as a cofactor. Mn(2+) is required as a cofactor.

It is found in the cytoplasm. The catalysed reaction is (2R,3S)-3-isopropylmalate + NAD(+) = 4-methyl-2-oxopentanoate + CO2 + NADH. The protein operates within amino-acid biosynthesis; L-leucine biosynthesis; L-leucine from 3-methyl-2-oxobutanoate: step 3/4. In terms of biological role, catalyzes the oxidation of 3-carboxy-2-hydroxy-4-methylpentanoate (3-isopropylmalate) to 3-carboxy-4-methyl-2-oxopentanoate. The product decarboxylates to 4-methyl-2 oxopentanoate. This is 3-isopropylmalate dehydrogenase from Buchnera aphidicola subsp. Schizaphis graminum (strain Sg).